Here is a 373-residue protein sequence, read N- to C-terminus: Putative F-box/kelch-repeat protein At3g19410 (373 aa).

Residues 1 to 46 (MTIPELPKDLIEEILCYVPATYLKRLRSTCKGWNRLFKDDRRFAKK) enclose the F-box domain. 3 Kelch repeats span residues 101 to 148 (RIFH…FVLG), 149 to 200 (YYQE…QCVS), and 329 to 373 (KLYI…EEKS).

The polypeptide is Putative F-box/kelch-repeat protein At3g19410 (Arabidopsis thaliana (Mouse-ear cress)).